Reading from the N-terminus, the 264-residue chain is MKQYLALMEHILAHGAVKTDRTGTGTRSVFGYQMRFDLNQGFPLVTTKKCHLRSIIHELLWFLQGDTNVAYLHEHNVSIWDEWADDKGNLGPVYGAQWRSWPTQSGKAVDQISQIIEQIKTQPDSRRLIVSAWNVGELDKMALAPCHALFQFYVADGKLSCQLYQRSCDVFLGLPFNIASYALLTMMVAQQCDLALGDFVWTGGDTHLYSNHMEQTKLQLSREPHALPQMNILRKPESIFDYQFDDFELVNYQPHPHIKAPVAI.

DUMP is bound at residue R21. H51 lines the (6R)-5,10-methylene-5,6,7,8-tetrahydrofolate pocket. 126–127 contacts dUMP; the sequence is RR. Catalysis depends on C146, which acts as the Nucleophile. DUMP is bound by residues 166–169, N177, and 207–209; these read RSCD and HLY. Residue D169 participates in (6R)-5,10-methylene-5,6,7,8-tetrahydrofolate binding. A263 is a (6R)-5,10-methylene-5,6,7,8-tetrahydrofolate binding site.

Belongs to the thymidylate synthase family. Bacterial-type ThyA subfamily. As to quaternary structure, homodimer.

It localises to the cytoplasm. It catalyses the reaction dUMP + (6R)-5,10-methylene-5,6,7,8-tetrahydrofolate = 7,8-dihydrofolate + dTMP. The protein operates within pyrimidine metabolism; dTTP biosynthesis. Its function is as follows. Catalyzes the reductive methylation of 2'-deoxyuridine-5'-monophosphate (dUMP) to 2'-deoxythymidine-5'-monophosphate (dTMP) while utilizing 5,10-methylenetetrahydrofolate (mTHF) as the methyl donor and reductant in the reaction, yielding dihydrofolate (DHF) as a by-product. This enzymatic reaction provides an intracellular de novo source of dTMP, an essential precursor for DNA biosynthesis. The chain is Thymidylate synthase from Shewanella denitrificans (strain OS217 / ATCC BAA-1090 / DSM 15013).